The primary structure comprises 194 residues: ECF RNA polymerase sigma factor SigX (194 aa).

Residues Asp-32–Tyr-45 carry the Polymerase core binding motif. A DNA-binding region (H-T-H motif) is located at residues Ile-136–His-155.

It belongs to the sigma-70 factor family. ECF subfamily. Interacts transiently with the RNAP core.

It is found in the cell membrane. In terms of biological role, sigma factors are initiation factors that promote the attachment of RNA polymerase (RNAP) to specific initiation sites and are then released. May be involved in the regulation of iron metabolism. Associates with RNAP core during early growth phases, association decreases as cells age. This is ECF RNA polymerase sigma factor SigX (sigX) from Bacillus subtilis (strain 168).